The sequence spans 402 residues: Chorismate synthase (402 aa).

Residues arginine 40 and arginine 46 each contribute to the NADP(+) site. Residues 134-136 (RAS), 255-256 (QA), glycine 299, 314-318 (KPIAT), and arginine 340 contribute to the FMN site.

It belongs to the chorismate synthase family. Homotetramer. Requires FMNH2 as cofactor.

It carries out the reaction 5-O-(1-carboxyvinyl)-3-phosphoshikimate = chorismate + phosphate. It functions in the pathway metabolic intermediate biosynthesis; chorismate biosynthesis; chorismate from D-erythrose 4-phosphate and phosphoenolpyruvate: step 7/7. In terms of biological role, catalyzes the anti-1,4-elimination of the C-3 phosphate and the C-6 proR hydrogen from 5-enolpyruvylshikimate-3-phosphate (EPSP) to yield chorismate, which is the branch point compound that serves as the starting substrate for the three terminal pathways of aromatic amino acid biosynthesis. This reaction introduces a second double bond into the aromatic ring system. The polypeptide is Chorismate synthase (Leifsonia xyli subsp. xyli (strain CTCB07)).